The sequence spans 335 residues: D-alanine--D-alanine ligase (335 aa).

The ATP-grasp domain occupies 124 to 330 (KMWFSALGVP…FTEYLSDVIS (207 aa)). 154–209 (AFDTWGSVFIKAASQGSSVGCYKVDVRDNIAKVLEEAFGYAPYVVVEKTIKARELE) provides a ligand contact to ATP. Mg(2+) is bound by residues Asp284, Glu297, and Asn299.

The protein belongs to the D-alanine--D-alanine ligase family. Mg(2+) serves as cofactor. It depends on Mn(2+) as a cofactor.

It is found in the cytoplasm. It catalyses the reaction 2 D-alanine + ATP = D-alanyl-D-alanine + ADP + phosphate + H(+). It functions in the pathway cell wall biogenesis; peptidoglycan biosynthesis. Cell wall formation. The chain is D-alanine--D-alanine ligase from Shewanella denitrificans (strain OS217 / ATCC BAA-1090 / DSM 15013).